A 289-amino-acid chain; its full sequence is Protoheme IX farnesyltransferase (289 aa).

A run of 9 helical transmembrane segments spans residues 9–29 (VALM…PVMM), 35–55 (MPSL…AGSA), 89–109 (LTFG…LVNW), 110–130 (PSAL…TLGL), 138–158 (IVIG…AVTG), 164–184 (AVLL…ALAM), 188–208 (DDYA…EVVT), 228–248 (VAHT…WFLA), and 269–289 (FHMS…TAVV).

Belongs to the UbiA prenyltransferase family. Protoheme IX farnesyltransferase subfamily.

It is found in the cell membrane. It catalyses the reaction heme b + (2E,6E)-farnesyl diphosphate + H2O = Fe(II)-heme o + diphosphate. It participates in porphyrin-containing compound metabolism; heme O biosynthesis; heme O from protoheme: step 1/1. Converts heme B (protoheme IX) to heme O by substitution of the vinyl group on carbon 2 of heme B porphyrin ring with a hydroxyethyl farnesyl side group. This Frankia alni (strain DSM 45986 / CECT 9034 / ACN14a) protein is Protoheme IX farnesyltransferase.